The following is a 501-amino-acid chain: Lysine--tRNA ligase (501 aa).

Mg(2+) is bound by residues E404 and E411.

Belongs to the class-II aminoacyl-tRNA synthetase family. In terms of assembly, homodimer. It depends on Mg(2+) as a cofactor.

The protein localises to the cytoplasm. It catalyses the reaction tRNA(Lys) + L-lysine + ATP = L-lysyl-tRNA(Lys) + AMP + diphosphate. This is Lysine--tRNA ligase from Campylobacter jejuni subsp. jejuni serotype O:6 (strain 81116 / NCTC 11828).